The sequence spans 156 residues: ATP synthase subunit b (156 aa).

Residues 7-29 form a helical membrane-spanning segment; it reads LIAQAISFAILIWFTTKFVWPYL.

The protein belongs to the ATPase B chain family. F-type ATPases have 2 components, F(1) - the catalytic core - and F(0) - the membrane proton channel. F(1) has five subunits: alpha(3), beta(3), gamma(1), delta(1), epsilon(1). F(0) has three main subunits: a(1), b(2) and c(10-14). The alpha and beta chains form an alternating ring which encloses part of the gamma chain. F(1) is attached to F(0) by a central stalk formed by the gamma and epsilon chains, while a peripheral stalk is formed by the delta and b chains.

It localises to the cell inner membrane. Functionally, f(1)F(0) ATP synthase produces ATP from ADP in the presence of a proton or sodium gradient. F-type ATPases consist of two structural domains, F(1) containing the extramembraneous catalytic core and F(0) containing the membrane proton channel, linked together by a central stalk and a peripheral stalk. During catalysis, ATP synthesis in the catalytic domain of F(1) is coupled via a rotary mechanism of the central stalk subunits to proton translocation. In terms of biological role, component of the F(0) channel, it forms part of the peripheral stalk, linking F(1) to F(0). The protein is ATP synthase subunit b of Methylobacillus flagellatus (strain ATCC 51484 / DSM 6875 / VKM B-1610 / KT).